Reading from the N-terminus, the 317-residue chain is Zinc transporter ZIP3 (317 aa).

Over 1–3 (MSQ) the chain is Extracellular. Residues 4 to 24 (LLVAKVLCMVGVFFFMLLGSL) form a helical membrane-spanning segment. Residues 25-42 (LPVKVIEADFEKAHRSKK) lie on the Cytoplasmic side of the membrane. A helical transmembrane segment spans residues 43–63 (VLSLCNTFGGGVFLATCFNAL). Residues 64 to 85 (LPAVRDKLQQVLSLGHISTDYP) are Extracellular-facing. Residues 86-106 (LAETLMMVGFFLTVFVEQLVL) form a helical membrane-spanning segment. The Cytoplasmic segment spans residues 107–172 (TFRRERPPFI…RELGRPGPLR (66 aa)). 2 positions are modified to phosphoserine: Ser-125 and Ser-129. The chain crosses the membrane as a helical span at residues 173-193 (LLSLVFALSAHSVFEGLALGL). The Extracellular segment spans residues 194–199 (QEEGER). A helical transmembrane segment spans residues 200 to 220 (VVSLFVGVAVHETLVAVALGI). The Cytoplasmic segment spans residues 221-232 (SMARSAVPLRDA). Residues 233–253 (AKLAVTVSAMIPVGIGLGLGI) traverse the membrane as a helical segment. Residues 254-265 (ESARSVASSVAS) lie on the Extracellular side of the membrane. A helical membrane pass occupies residues 266–286 (ALLQGLAGGTFLFVTFLEILA). Residues 287–294 (KELEERSE) are Cytoplasmic-facing. Residues 295–315 (QLLKVLFLVLGYAVLAGMVFL) traverse the membrane as a helical segment. At 316–317 (KW) the chain is on the extracellular side.

The protein belongs to the ZIP transporter (TC 2.A.5) family.

Its subcellular location is the cell membrane. It localises to the apical cell membrane. It catalyses the reaction Zn(2+)(in) = Zn(2+)(out). Its function is as follows. Transporter for the divalent cation Zn(2+). Mediates the influx of Zn(2+) into cells from extracellular space. Controls Zn(2+) accumulation into dentate gyrus granule cells in the hippocampus. Mediates Zn(2+) reuptake from the secreted milk within the alveolar lumen. This Rattus norvegicus (Rat) protein is Zinc transporter ZIP3 (Slc39a3).